We begin with the raw amino-acid sequence, 414 residues long: Alanine--glyoxylate aminotransferase (414 aa).

The transit peptide at 1-23 (MFRMLAKASVTLGSRAAGWVRTM) directs the protein to the mitochondrion. At lysine 231 the chain carries N6-(pyridoxal phosphate)lysine. Lysine 247 bears the N6-acetyllysine; alternate mark. Lysine 247 carries the post-translational modification N6-succinyllysine; alternate. An N6-acetyllysine modification is found at lysine 256. Lysine 330 is modified (N6-acetyllysine; alternate). Lysine 330 is modified (N6-succinyllysine; alternate). Lysine 334 is subject to N6-acetyllysine. Arginine 382 provides a ligand contact to substrate. Positions 412–414 (NKL) match the Microbody targeting signal motif.

It belongs to the class-V pyridoxal-phosphate-dependent aminotransferase family. As to quaternary structure, homodimer. Pyridoxal 5'-phosphate is required as a cofactor.

The protein localises to the peroxisome. It localises to the mitochondrion matrix. The enzyme catalyses L-serine + pyruvate = 3-hydroxypyruvate + L-alanine. The catalysed reaction is glyoxylate + L-alanine = glycine + pyruvate. Functionally, catalyzes the transamination of glyoxylate to glycine and contributes to the glyoxylate detoxification. In terms of biological role, catalyzes the transamination between L-serine and pyruvate and weakly contributes to gluconeogenesis from the L-serine metabolism. In Mus musculus (Mouse), this protein is Alanine--glyoxylate aminotransferase.